A 309-amino-acid chain; its full sequence is Dicarboxylate carrier UCP2 (309 aa).

The Mitochondrial intermembrane portion of the chain corresponds to 1 to 16; the sequence is MVGFKATDVPPTATVK. 3 Solcar repeats span residues 11–106, 114–203, and 212–297; these read PTAT…VKQF, AGIG…IKDT, and DDLP…LKRA. Positions 16 to 63 are important for interaction with long-chain fatty acids; the sequence is KFLGAGTAACIADLITFPLDTAKVRLQIQGERQGPMQAAASAQYRGVL. A helical membrane pass occupies residues 17 to 40; it reads FLGAGTAACIADLITFPLDTAKVR. Topologically, residues 41–77 are mitochondrial matrix; the sequence is LQIQGERQGPMQAAASAQYRGVLGTILTMVRTEGPRS. Residues 78 to 103 form a helical membrane-spanning segment; the sequence is LYSGLVAGLQRQMSFASVRIGLYDSV. Over 104 to 119 the chain is Mitochondrial intermembrane; the sequence is KQFYTKGSEHAGIGSR. Residues 120–145 traverse the membrane as a helical segment; the sequence is LLAGSTTGALAVAVAQPTDVVKVRFQ. The Mitochondrial matrix portion of the chain corresponds to 146-173; sequence AQARAGAGRRYQSTVEAYKTIAREEGFR. The helical transmembrane segment at 174 to 199 threads the bilayer; the sequence is GLWKGTSPNVARNAIVNCAELVTYDL. Over 200–217 the chain is Mitochondrial intermembrane; that stretch reads IKDTLLKAHLMTDDLPCH. The helical transmembrane segment at 218 to 242 threads the bilayer; the sequence is FTSAFGAGFCTTVIASPVDVVKTRY. Residues 243-268 are Mitochondrial matrix-facing; it reads MNSALGQYSSAGHCALTMLQKEGPQA. Residues 269 to 294 form a helical membrane-spanning segment; that stretch reads FYKGFMPSFLRLGSWNVVMFVTYEQL. Positions 278 to 285 are important for interaction with long-chain fatty acids; that stretch reads LRLGSWNV. Residues 295–309 are Mitochondrial intermembrane-facing; sequence KRALMAARASREAPF.

It belongs to the mitochondrial carrier (TC 2.A.29) family. As to quaternary structure, homotetramer. Adopts an asymmetrical dimer of dimers functional form. Interacts with MICU1 (when methylated); leading to decrease the calcium sensitivity of MICU1.

The protein localises to the mitochondrion inner membrane. It carries out the reaction L-aspartate(out) + phosphate(in) + H(+)(in) = L-aspartate(in) + phosphate(out) + H(+)(out). The catalysed reaction is oxaloacetate(out) + phosphate(in) + H(+)(in) = oxaloacetate(in) + phosphate(out) + H(+)(out). The enzyme catalyses (S)-malate(out) + phosphate(in) + H(+)(in) = (S)-malate(in) + phosphate(out) + H(+)(out). It catalyses the reaction malonate(out) + phosphate(in) + H(+)(in) = malonate(in) + phosphate(out) + H(+)(out). It carries out the reaction sulfate(out) + phosphate(in) + H(+)(in) = sulfate(in) + phosphate(out) + H(+)(out). The catalysed reaction is (S)-malate(out) = (S)-malate(in). The enzyme catalyses L-aspartate(out) = L-aspartate(in). It catalyses the reaction phosphate(in) = phosphate(out). It carries out the reaction chloride(in) = chloride(out). The catalysed reaction is H(+)(in) = H(+)(out). The enzyme catalyses a long-chain fatty acid(out) = a long-chain fatty acid(in). Its function is as follows. Antiporter that exports dicarboxylate intermediates of the Krebs cycle in exchange for phosphate plus a proton across the inner membrane of mitochondria, a process driven by mitochondrial motive force with an overall impact on glycolysis, glutaminolysis and glutathione-dependent redox balance. Continuous export of oxaloacetate and related four-carbon dicarboxylates from mitochondrial matrix into the cytosol negatively regulates the oxidation of acetyl-CoA substrates via the Krebs cycle lowering the ATP/ADP ratio and reactive oxygen species (ROS) production. May mediate inducible proton entry into the mitochondrial matrix affecting ATP turnover as a protection mechanism against oxidative stress. The proton currents are most likely associated with fatty acid flipping across the inner membrane of mitochondria in a metabolic process regulated by free fatty acids and purine nucleotides. Regulates the use of glucose as a source of energy. Required for glucose-induced DRP1-dependent mitochondrial fission and neuron activation in the ventromedial nucleus of the hypothalamus (VMH). This mitochondrial adaptation mechanism modulates the VMH pool of glucose-excited neurons with an impact on systemic glucose homeostasis. Regulates ROS levels and metabolic reprogramming of macrophages during the resolution phase of inflammation. Attenuates ROS production in response to IL33 to preserve the integrity of the Krebs cycle required for persistent production of itaconate and subsequent GATA3-dependent differentiation of inflammation-resolving alternatively activated macrophages. Can unidirectionally transport anions including L-malate, L-aspartate, phosphate and chloride ions. Does not mediate adaptive thermogenesis. This chain is Dicarboxylate carrier UCP2 (UCP2), found in Bos taurus (Bovine).